The primary structure comprises 948 residues: Putative JmjC domain-containing histone demethylation protein 1 (948 aa).

Residues 243 to 402 (VSTTKLAYYV…PQLSIYNLEL (160 aa)) enclose the JmjC domain. Threonine 294 contacts substrate. Fe cation-binding residues include histidine 297 and glutamate 299. Lysine 314 contacts substrate.

It belongs to the JHDM1 histone demethylase family. Fe(2+) serves as cofactor.

The protein resides in the nucleus. It catalyses the reaction N(6),N(6)-dimethyl-L-lysyl(36)-[histone H3] + 2 2-oxoglutarate + 2 O2 = L-lysyl(36)-[histone H3] + 2 formaldehyde + 2 succinate + 2 CO2. Functionally, may be a histone demethylase that specifically demethylates 'Lys-36' of histone H3, thereby playing a central role in histone code. Represses transcriptional silencing by negatively affecting heterochromatin stability. This Schizosaccharomyces pombe (strain 972 / ATCC 24843) (Fission yeast) protein is Putative JmjC domain-containing histone demethylation protein 1 (jhd1).